The chain runs to 177 residues: Isopentenyl-diphosphate Delta-isomerase 2 (177 aa).

Mn(2+) contacts are provided by His24 and His30. The region spanning 28–160 (MLHRAFSIFV…PDVYTVWFKK (133 aa)) is the Nudix hydrolase domain. Residue Cys65 is part of the active site. Cys65 is a Mg(2+) binding site. His67 serves as a coordination point for Mn(2+). Mg(2+) is bound at residue Glu85. 2 residues coordinate Mn(2+): Glu110 and Glu112. Glu112 is an active-site residue.

Belongs to the IPP isomerase type 1 family. Homodimer. It depends on Mg(2+) as a cofactor. Mn(2+) is required as a cofactor.

The protein resides in the cytoplasm. The catalysed reaction is isopentenyl diphosphate = dimethylallyl diphosphate. Its pathway is isoprenoid biosynthesis; dimethylallyl diphosphate biosynthesis; dimethylallyl diphosphate from isopentenyl diphosphate: step 1/1. Functionally, catalyzes the 1,3-allylic rearrangement of the homoallylic substrate isopentenyl (IPP) to its highly electrophilic allylic isomer, dimethylallyl diphosphate (DMAPP). This is Isopentenyl-diphosphate Delta-isomerase 2 from Photorhabdus laumondii subsp. laumondii (strain DSM 15139 / CIP 105565 / TT01) (Photorhabdus luminescens subsp. laumondii).